The sequence spans 580 residues: tRNA-guanine(15) transglycosylase (580 aa).

The active-site Nucleophile is the Asp-91. Positions 126 and 192 each coordinate substrate. Residues Cys-275, Cys-277, and Cys-280 each coordinate Zn(2+). A PUA domain is found at 504 to 579 (RMRVVVDEDA…LAVKVRRGVE (76 aa)).

It belongs to the archaeosine tRNA-ribosyltransferase family. Requires Zn(2+) as cofactor.

The enzyme catalyses guanosine(15) in tRNA + 7-cyano-7-deazaguanine = 7-cyano-7-carbaguanosine(15) in tRNA + guanine. The protein operates within tRNA modification; archaeosine-tRNA biosynthesis. Its function is as follows. Exchanges the guanine residue with 7-cyano-7-deazaguanine (preQ0) at position 15 in the dihydrouridine loop (D-loop) of archaeal tRNAs. This chain is tRNA-guanine(15) transglycosylase, found in Thermococcus onnurineus (strain NA1).